A 273-amino-acid chain; its full sequence is Putative phosphoenolpyruvate synthase regulatory protein (273 aa).

153 to 160 (GVSRSGKT) serves as a coordination point for ADP.

It belongs to the pyruvate, phosphate/water dikinase regulatory protein family. PSRP subfamily.

The catalysed reaction is [pyruvate, water dikinase] + ADP = [pyruvate, water dikinase]-phosphate + AMP + H(+). It catalyses the reaction [pyruvate, water dikinase]-phosphate + phosphate + H(+) = [pyruvate, water dikinase] + diphosphate. Bifunctional serine/threonine kinase and phosphorylase involved in the regulation of the phosphoenolpyruvate synthase (PEPS) by catalyzing its phosphorylation/dephosphorylation. This Variovorax paradoxus (strain S110) protein is Putative phosphoenolpyruvate synthase regulatory protein.